A 471-amino-acid chain; its full sequence is Argininosuccinate lyase (471 aa).

The protein belongs to the lyase 1 family. Argininosuccinate lyase subfamily.

It localises to the cytoplasm. The enzyme catalyses 2-(N(omega)-L-arginino)succinate = fumarate + L-arginine. Its pathway is amino-acid biosynthesis; L-arginine biosynthesis; L-arginine from L-ornithine and carbamoyl phosphate: step 3/3. In Deinococcus radiodurans (strain ATCC 13939 / DSM 20539 / JCM 16871 / CCUG 27074 / LMG 4051 / NBRC 15346 / NCIMB 9279 / VKM B-1422 / R1), this protein is Argininosuccinate lyase.